The following is a 300-amino-acid chain: Cholesterol 25-hydroxylase-like protein (300 aa).

N-linked (GlcNAc...) asparagine glycosylation occurs at Asn-9. 3 helical membrane passes run 43–63 (LFPP…FTFI), 95–115 (LQGW…LIWV), and 130–152 (MVSQ…HYFN). A Fatty acid hydroxylase domain is found at 135–266 (AIFFLAFDFT…WFNYLDRLMG (132 aa)). Residues 148-152 (FHYFN) carry the Histidine box-1 motif. Positions 163–167 (HSVHH) match the Histidine box-2 motif. The helical transmembrane segment at 180-200 (LHPFELFFVATFITTVPWIFP) threads the bilayer. Positions 242–248 (AHDMHHL) match the Histidine box-3 motif.

It belongs to the sterol desaturase family. Fe cation is required as a cofactor.

The protein resides in the membrane. Probable sterol desaturase. This chain is Cholesterol 25-hydroxylase-like protein, found in Caenorhabditis briggsae.